The chain runs to 196 residues: UPF0340 protein TTHA0583 (196 aa).

This sequence belongs to the UPF0340 family.

This Thermus thermophilus (strain ATCC 27634 / DSM 579 / HB8) protein is UPF0340 protein TTHA0583.